The primary structure comprises 197 residues: dITP/XTP pyrophosphatase (197 aa).

Substrate is bound at residue 8-13 (TKNKGK). Residues glutamate 42 and aspartate 71 each contribute to the Mg(2+) site. Aspartate 71 functions as the Proton acceptor in the catalytic mechanism. Residues serine 72, 154-157 (FGYD), lysine 177, and 182-183 (HR) each bind substrate.

This sequence belongs to the HAM1 NTPase family. In terms of assembly, homodimer. Mg(2+) is required as a cofactor.

It catalyses the reaction XTP + H2O = XMP + diphosphate + H(+). The catalysed reaction is dITP + H2O = dIMP + diphosphate + H(+). The enzyme catalyses ITP + H2O = IMP + diphosphate + H(+). In terms of biological role, pyrophosphatase that catalyzes the hydrolysis of nucleoside triphosphates to their monophosphate derivatives, with a high preference for the non-canonical purine nucleotides XTP (xanthosine triphosphate), dITP (deoxyinosine triphosphate) and ITP. Seems to function as a house-cleaning enzyme that removes non-canonical purine nucleotides from the nucleotide pool, thus preventing their incorporation into DNA/RNA and avoiding chromosomal lesions. This is dITP/XTP pyrophosphatase from Oceanobacillus iheyensis (strain DSM 14371 / CIP 107618 / JCM 11309 / KCTC 3954 / HTE831).